Reading from the N-terminus, the 396-residue chain is Probable sugar efflux transporter (396 aa).

A run of 12 helical transmembrane segments spans residues 15-35 (VLIM…PVAM), 51-71 (GLMM…AMLA), 84-104 (LFII…FWIL), 109-129 (MCIA…VMRI), 137-157 (QALG…LPIG), 168-188 (VTFG…IRLL), 209-229 (PLLL…FTAY), 245-265 (NFAT…SLLF), 273-293 (PTKF…LLLF), 297-317 (TIIA…CIGL), 333-353 (VATA…ALFG), and 365-385 (IGYT…TTHL).

This sequence belongs to the major facilitator superfamily. SotB (TC 2.A.1.2) family.

It localises to the cell inner membrane. In terms of biological role, involved in the efflux of sugars. The physiological role may be the reduction of the intracellular concentration of toxic sugars or sugar metabolites. The polypeptide is Probable sugar efflux transporter (Haemophilus influenzae (strain ATCC 51907 / DSM 11121 / KW20 / Rd)).